The chain runs to 356 residues: UDP-N-acetylglucosamine--N-acetylmuramyl-(pentapeptide) pyrophosphoryl-undecaprenol N-acetylglucosamine transferase (356 aa).

UDP-N-acetyl-alpha-D-glucosamine-binding positions include 14–16, Asn126, Arg162, Ser190, Ile244, and Gln289; that span reads TGG.

It belongs to the glycosyltransferase 28 family. MurG subfamily.

It localises to the cell inner membrane. It carries out the reaction di-trans,octa-cis-undecaprenyl diphospho-N-acetyl-alpha-D-muramoyl-L-alanyl-D-glutamyl-meso-2,6-diaminopimeloyl-D-alanyl-D-alanine + UDP-N-acetyl-alpha-D-glucosamine = di-trans,octa-cis-undecaprenyl diphospho-[N-acetyl-alpha-D-glucosaminyl-(1-&gt;4)]-N-acetyl-alpha-D-muramoyl-L-alanyl-D-glutamyl-meso-2,6-diaminopimeloyl-D-alanyl-D-alanine + UDP + H(+). It functions in the pathway cell wall biogenesis; peptidoglycan biosynthesis. Cell wall formation. Catalyzes the transfer of a GlcNAc subunit on undecaprenyl-pyrophosphoryl-MurNAc-pentapeptide (lipid intermediate I) to form undecaprenyl-pyrophosphoryl-MurNAc-(pentapeptide)GlcNAc (lipid intermediate II). This is UDP-N-acetylglucosamine--N-acetylmuramyl-(pentapeptide) pyrophosphoryl-undecaprenol N-acetylglucosamine transferase from Cupriavidus necator (strain ATCC 17699 / DSM 428 / KCTC 22496 / NCIMB 10442 / H16 / Stanier 337) (Ralstonia eutropha).